A 493-amino-acid polypeptide reads, in one-letter code: MPRGFLVKRTKRSGSSYRARPVEPLFPPPGPLAAQSSPEEPGRGLLGSPCLAPPQDDAEWGAGGGDGPGPSPARPAGPELRRAFLERCLRSPVSAESFPSATAFCSAAPAAVTSGEELVPPQVPVSVPIPVPGPAPHGLQRRGKGAPVCASAPAAVRKPKAVRRLSFADEVTTSPVLGLKIKEEEPGAPARALGGVRTPLGEFICQLCKHQYADPFALAQHRCSRIVRVEYRCPECDKVFSCPANLASHRRWHKPRPTPACAASKPPHAPLTPPDPSLATGKENGRVPRTDDQHPQAPDSSGDGQHRDSAARPGLQALVYPEAARPQAPYPEVILGRHGPGSSGASAGATSEVFVCPYCHKKFRRQAYLRKHLGTHETGSARAPTPGFGSERTAPLTFACPLCGAHFPSADIREKHRLWHAVREELLLPALVGAPSEAGPGGASDGSAQQIFSCKYCPSTFFSSPGLTRHINKCHPSESRQVLLLQMPLRPGC.

The segment covering Met1–Arg12 has biased composition (basic residues). The segment at Met1–Arg20 is SNAG domain. Residues Met1–Gly77 are disordered. A C2H2-type 1; atypical zinc finger spans residues Phe203–Cys223. Residues Tyr231–His253 form a C2H2-type 2 zinc finger. The disordered stretch occupies residues Ser248–Ala310. Residues Pro267 to Pro276 show a composition bias toward pro residues. Over residues Glu283–His294 the composition is skewed to basic and acidic residues. 3 consecutive C2H2-type zinc fingers follow at residues Phe354–His376, Phe398–His420, and Phe452–His475.

In terms of tissue distribution, expressed in spleen, stomach, liver, kidney and testis. In the pancreas, expressed in islet cells, including insulin-producing beta-cells, but not in acinar cells (at protein level). In the brain, expressed in the neuronal cells of the cerebral cortex, the Purkinje cells of the cerebellum and the hippocampal region including CA1 and CA3 (at protein level).

It localises to the cytoplasm. The protein localises to the nucleus. Its function is as follows. May function as a growth suppressor or tumor suppressor in liver cells and in certain neurons. The protein is Insulinoma-associated protein 2 (Insm2) of Mus musculus (Mouse).